We begin with the raw amino-acid sequence, 483 residues long: Spermatogenesis-defective protein 39 homolog (483 aa).

It belongs to the SPE39 family. As to quaternary structure, interacts with vps33b. High levels detected in liver and small intestine of larvae at 5 days post-fertilization.

The protein resides in the cytoplasm. Its subcellular location is the cytoplasmic vesicle. It localises to the early endosome. It is found in the recycling endosome. The protein localises to the late endosome. Its function is as follows. Proposed to be involved in endosomal maturation implicating in part vps33b. In epithelial cells, the vps33b:vipas39 complex may play a role in the apical rab11a-dependent recycling pathway and in the maintenance of the apical-basolateral polarity. May play a role in lysosomal trafficking, probably via association with the core HOPS complex in a discrete population of endosomes; the functions seems to be independent of vps33b. May play a role in vesicular trafficking during spermatogenesis. May be involved in direct or indirect transcriptional regulation of E-cadherin. This chain is Spermatogenesis-defective protein 39 homolog (vipas39), found in Danio rerio (Zebrafish).